The chain runs to 62 residues: Protein CYSTEINE-RICH TRANSMEMBRANE MODULE 2 (62 aa).

2 helical membrane-spanning segments follow: residues V23 to D39 and V33 to I53.

Belongs to the CYSTM1 family. As to quaternary structure, heterodimers. Binds weakly to CYSTM7 and WIH1/CYSTM13. As to expression, mostly expressed in stems, siliques, leaves and flowers and, to a lower extent, in roots.

It localises to the cell membrane. Its subcellular location is the nucleus. The protein localises to the secreted. The protein resides in the cell wall. Functionally, involved in resistance to abiotic stress. In terms of biological role, confers resistance to heavy metal ions (e.g. cadmium (CdCl(2)) and copper (CuCl(2))) by chelating them at the plasma membrane of root cells, thus stopping their entry and reducing their accumulation. The chain is Protein CYSTEINE-RICH TRANSMEMBRANE MODULE 2 from Arabidopsis thaliana (Mouse-ear cress).